The sequence spans 381 residues: tRNA (guanine(6)-N2)-methyltransferase (381 aa).

The region spanning Lys43 to Thr157 is the THUMP domain. Residues His173–Leu177, Ser204–Thr206, Asp261, Asp289–Ala290, and Asn306 contribute to the S-adenosyl-L-methionine site.

Belongs to the methyltransferase superfamily.

The protein resides in the cytoplasm. It carries out the reaction guanosine(6) in tRNA + S-adenosyl-L-methionine = N(2)-methylguanosine(6) in tRNA + S-adenosyl-L-homocysteine + H(+). Functionally, S-adenosyl-L-methionine-dependent methyltransferase that catalyzes the methylation of the guanosine nucleotide at position 6 (m2G6) in tRNA(Cys). The polypeptide is tRNA (guanine(6)-N2)-methyltransferase (Methanocaldococcus jannaschii (strain ATCC 43067 / DSM 2661 / JAL-1 / JCM 10045 / NBRC 100440) (Methanococcus jannaschii)).